Here is a 389-residue protein sequence, read N- to C-terminus: Coproporphyrin III ferrochelatase (389 aa).

Residues Ser70 and Tyr139 each contribute to the Fe-coproporphyrin III site. His205 provides a ligand contact to Fe(2+). The tract at residues 207-229 (IPSTDAGKSGPSGRPDSGEPWGE) is disordered. Glu303 contacts Fe(2+).

The protein belongs to the ferrochelatase family.

It localises to the cytoplasm. It catalyses the reaction Fe-coproporphyrin III + 2 H(+) = coproporphyrin III + Fe(2+). It participates in porphyrin-containing compound metabolism; protoheme biosynthesis. In terms of biological role, involved in coproporphyrin-dependent heme b biosynthesis. Catalyzes the insertion of ferrous iron into coproporphyrin III to form Fe-coproporphyrin III. The chain is Coproporphyrin III ferrochelatase from Leifsonia xyli subsp. xyli (strain CTCB07).